A 232-amino-acid polypeptide reads, in one-letter code: Succinyl-CoA:3-ketoacid coenzyme A transferase subunit A (232 aa).

24–30 (GGFGLCG) is a binding site for CoA.

Belongs to the 3-oxoacid CoA-transferase subunit A family. As to quaternary structure, heterodimer of a subunit A and a subunit B.

It catalyses the reaction a 3-oxo acid + succinyl-CoA = a 3-oxoacyl-CoA + succinate. This chain is Succinyl-CoA:3-ketoacid coenzyme A transferase subunit A (scoA), found in Helicobacter pylori (strain J99 / ATCC 700824) (Campylobacter pylori J99).